Here is a 289-residue protein sequence, read N- to C-terminus: Glyceraldehyde-3-phosphate dehydrogenase (289 aa).

The NAD(+) site is built by D12 and R57. D-glyceraldehyde 3-phosphate is bound by residues 128–130 (SCT), T159, 188–189 (TG), and R211. C129 functions as the Nucleophile in the catalytic mechanism.

This sequence belongs to the glyceraldehyde-3-phosphate dehydrogenase family. Homotetramer.

Its subcellular location is the cytoplasm. It catalyses the reaction D-glyceraldehyde 3-phosphate + phosphate + NAD(+) = (2R)-3-phospho-glyceroyl phosphate + NADH + H(+). It functions in the pathway carbohydrate degradation; glycolysis; pyruvate from D-glyceraldehyde 3-phosphate: step 1/5. The polypeptide is Glyceraldehyde-3-phosphate dehydrogenase (GPD) (Amanita muscaria (Fly agaric)).